A 418-amino-acid chain; its full sequence is MNTHIYADIITIGDEILYGQITDTNSQWISAELDKLGIKTRRKSSVSDKADEILQMLREASQRSSIVILTGGLGPTNDDITKKTLCTYFKTELVWNDAVLAHLENLFFIRGRVMNALNKEQALIPSNCEVLTNRHGTAPGMWFDVNGVVYISLPGVPFEMKGILSDVGFDKLKHRFQTPHIIHRVIKTSGVGETTLAELIADWEAALPPYMGLAYLPSAGEVKLRLTGSGDNLEQLQAEIQQQVDSVLPSIEKYVYGFDADTLEYTVGQLLKKQNKTIATAESCTGGYLAHLLTSVAGASAYYSGSVVAYQNKIKTDFLDVPAEVLSKYGAVSEETVKIMAAEVRKKFGASIGVSASGIAGPDGGTEEKPVGTIWIAYADESKVVTLKLQLSNIRENNIRMTALAILNLVRRQLKEVK.

This sequence belongs to the CinA family.

This chain is CinA-like protein, found in Cytophaga hutchinsonii (strain ATCC 33406 / DSM 1761 / CIP 103989 / NBRC 15051 / NCIMB 9469 / D465).